A 421-amino-acid chain; its full sequence is Succinate--CoA ligase [ADP-forming] subunit beta, mitochondrial (421 aa).

The N-terminal 26 residues, 1–26 (MRGLVNKLVSRSLSISGKWQNQQLRR), are a transit peptide targeting the mitochondrion. The ATP-grasp domain maps to 35-278 (AELMGKYGVN…PTQEDPREVA (244 aa)). ATP contacts are provided by residues Lys74, 81-83 (GRG), and Glu141. Mg(2+) contacts are provided by Asn233 and Asp247. Substrate contacts are provided by residues Asn298 and 355 to 357 (GIM).

Belongs to the succinate/malate CoA ligase beta subunit family. Heterodimer of an alpha and a beta subunit. The cofactor is Mg(2+).

The protein resides in the mitochondrion. It carries out the reaction succinate + ATP + CoA = succinyl-CoA + ADP + phosphate. Its pathway is carbohydrate metabolism; tricarboxylic acid cycle; succinate from succinyl-CoA (ligase route): step 1/1. In terms of biological role, succinyl-CoA synthetase functions in the citric acid cycle (TCA), coupling the hydrolysis of succinyl-CoA to the synthesis of ATP and thus represents the only step of substrate-level phosphorylation in the TCA. The beta subunit provides nucleotide specificity of the enzyme and binds the substrate succinate, while the binding sites for coenzyme A and phosphate are found in the alpha subunit. In Arabidopsis thaliana (Mouse-ear cress), this protein is Succinate--CoA ligase [ADP-forming] subunit beta, mitochondrial.